The following is a 1177-amino-acid chain: DNA-directed RNA polymerase subunit beta' (1177 aa).

The Zn(2+) site is built by C60, C62, C75, and C78. Mg(2+) contacts are provided by D450, D452, and D454. The Zn(2+) site is built by C795, C869, C876, and C879.

The protein belongs to the RNA polymerase beta' chain family. In terms of assembly, the RNAP catalytic core consists of 2 alpha, 1 beta, 1 beta' and 1 omega subunit. When a sigma factor is associated with the core the holoenzyme is formed, which can initiate transcription. Mg(2+) is required as a cofactor. Requires Zn(2+) as cofactor.

The catalysed reaction is RNA(n) + a ribonucleoside 5'-triphosphate = RNA(n+1) + diphosphate. Its function is as follows. DNA-dependent RNA polymerase catalyzes the transcription of DNA into RNA using the four ribonucleoside triphosphates as substrates. The sequence is that of DNA-directed RNA polymerase subunit beta' from Clostridium botulinum (strain Eklund 17B / Type B).